Consider the following 434-residue polypeptide: V-type ATP synthase beta chain (434 aa).

This sequence belongs to the ATPase alpha/beta chains family.

Produces ATP from ADP in the presence of a proton gradient across the membrane. The V-type beta chain is a regulatory subunit. The protein is V-type ATP synthase beta chain of Borreliella afzelii (strain PKo) (Borrelia afzelii).